The primary structure comprises 368 residues: Forkhead box protein I2 (368 aa).

The disordered stretch occupies residues 33-54 (QNQQLPQRPAAPPALGYGRNEY). Residues 124–218 (RPPYSYSSLI…DNGNFRRKRK (95 aa)) constitute a DNA-binding region (fork-head). A disordered region spans residues 243-272 (SLGSDSPRGASALEQSSYGTPESKSRPAGG). Over residues 255-264 (LEQSSYGTPE) the composition is skewed to polar residues.

It is found in the nucleus. In terms of biological role, possible transcriptional activator. This chain is Forkhead box protein I2, found in Xenopus tropicalis (Western clawed frog).